The following is a 469-amino-acid chain: 3-isopropylmalate dehydratase large subunit (469 aa).

Cys350, Cys410, and Cys413 together coordinate [4Fe-4S] cluster.

It belongs to the aconitase/IPM isomerase family. LeuC type 1 subfamily. In terms of assembly, heterodimer of LeuC and LeuD. It depends on [4Fe-4S] cluster as a cofactor.

It catalyses the reaction (2R,3S)-3-isopropylmalate = (2S)-2-isopropylmalate. It functions in the pathway amino-acid biosynthesis; L-leucine biosynthesis; L-leucine from 3-methyl-2-oxobutanoate: step 2/4. Catalyzes the isomerization between 2-isopropylmalate and 3-isopropylmalate, via the formation of 2-isopropylmaleate. This Brucella melitensis biotype 2 (strain ATCC 23457) protein is 3-isopropylmalate dehydratase large subunit.